Reading from the N-terminus, the 591-residue chain is Glutathione hydrolase (591 aa).

The first 41 residues, 1 to 41, serve as a signal peptide directing secretion; sequence MASKWIEEQPLVHRRDIRISSKSRIAAGLLVLLVLWRYGLP. L-glutamate is bound at residue arginine 122. N-linked (GlcNAc...) asparagine glycans are attached at residues asparagine 135, asparagine 270, and asparagine 389. The Nucleophile role is filled by threonine 393. Residues threonine 411, glutamate 432, and 464–465 contribute to the L-glutamate site; that span reads SA. N-linked (GlcNAc...) asparagine glycosylation is present at asparagine 534.

The protein belongs to the gamma-glutamyltransferase family.

It catalyses the reaction an N-terminal (5-L-glutamyl)-[peptide] + an alpha-amino acid = 5-L-glutamyl amino acid + an N-terminal L-alpha-aminoacyl-[peptide]. The enzyme catalyses glutathione + H2O = L-cysteinylglycine + L-glutamate. It carries out the reaction an S-substituted glutathione + H2O = an S-substituted L-cysteinylglycine + L-glutamate. Its pathway is mycotoxin biosynthesis. In terms of biological role, gamma-glutamyltransferase; part of the gene cluster that mediates the biosynthesis of the secondary metabolite ustiloxin B, an antimitotic tetrapeptide. First, ustA is processed by the subtilisin-like endoprotease Kex2 that is outside the ustiloxin B gene cluster, at the C-terminal side of Arg-Lys, after transfer to Golgi apparatus through the endoplasmic reticulum (ER). Cleavage by KEX2 generates 16 peptides YAIG-I to YAIG-XVI. To process the precursor peptide further, at least two peptidases are necessary to cleave the N-terminal and C-terminal sides of the Tyr-Ala-Ile-Gly core peptide which serves as backbone for the synthesis of ustiloxin B, through cyclization and modification of the tyrosine with a non-protein coding amino acid, norvaline. One of the two peptidases must be the serine peptidase ustP; and the other pepdidase is probably ustH. Macrocyclization of the core peptide derived from ustA requires the tyrosinase ustQ, as well as the homologous oxidases ustYa and ustYb, and leads to the production of the first cyclization product N-desmethylustiloxin F. For the formation of N-desmethylustiloxin F, three oxidation steps are required, hydroxylation at the benzylic position, hydroxylation at either the aromatic ring of Tyr or beta-position of Ile, and oxidative cyclization. UstQ may catalyze the oxidation of a phenol moiety, whereas the ustYa and ustYb are most likely responsible for the remaining two-step oxidations. N-desmethylustiloxin F is then methylated by ustM to yield ustiloxin F which in turn substrate of the cytochrome P450 monooxygenase ustC which catalyzes the formation of S-deoxyustiloxin H. The flavoprotein monooxygenases ustF1 and ustF2 then participate in the modification of the side chain of S-deoxyustiloxin H, leading to the synthesis of an oxime intermediate, via ustiloxin H. Finally, carboxylative dehydration performed by the cysteine desulfurase-like protein ustD yields ustiloxin B. The chain is Glutathione hydrolase from Aspergillus flavus (strain ATCC 200026 / FGSC A1120 / IAM 13836 / NRRL 3357 / JCM 12722 / SRRC 167).